The chain runs to 218 residues: MFTGIIEAVGNISAITSKGSDFEVSVNCDTLDLADVKIGDSIATNGICLTVVKLTANSYVADLSIETLSRTAFNYYKVGQAVNLEKAMLPTTRFGGHIVSGHVDAVAEVIECRTSGRAIDIWIRVPSQIEKYLSEKGSVTVDGVSLTVNAVTGNEFKLTIVPHTVVETTIADFKVGNKVNIEVDVLARYIERLLLVDKPEDKQSKISMDLLERNGFLL.

Lumazine-binding repeat units lie at residues 1–97 (MFTG…FGGH) and 98–194 (IVSG…ERLL). Residues 4–6 (GII), 48–50 (CLT), 62–67 (DLSIET), 101–103 (GHV), Lys-136, 145–147 (SLT), and 159–164 (TIVPHT) contribute to the 2,4-dihydroxypteridine site.

Homotrimer.

The enzyme catalyses 2 6,7-dimethyl-8-(1-D-ribityl)lumazine + H(+) = 5-amino-6-(D-ribitylamino)uracil + riboflavin. Its pathway is cofactor biosynthesis; riboflavin biosynthesis; riboflavin from 2-hydroxy-3-oxobutyl phosphate and 5-amino-6-(D-ribitylamino)uracil: step 2/2. Functionally, catalyzes the dismutation of two molecules of 6,7-dimethyl-8-ribityllumazine, resulting in the formation of riboflavin and 5-amino-6-(D-ribitylamino)uracil. The chain is Riboflavin synthase from Photobacterium phosphoreum.